Consider the following 545-residue polypeptide: Calcium-dependent protein kinase 10 (545 aa).

Residues 1 to 36 (MGNCNACVRPDSKESKPSSKPKKPNRDRKLNPFAGD) are disordered. The N-myristoyl glycine moiety is linked to residue G2. Residues 63 to 321 (YILGRELGRG…AQQVLAHPWI (259 aa)) enclose the Protein kinase domain. ATP contacts are provided by residues 69-77 (LGRGEFGIT) and K92. D187 (proton acceptor) is an active-site residue. S227 carries the post-translational modification Phosphoserine. Residues 327-357 (APNVPLGDIVRSRLKQFSMMNRFKKKVLRVI) form an autoinhibitory domain region. 4 EF-hand domains span residues 364-399 (QEVE…VGSQ), 400-435 (LGEP…LQKI), 436-471 (ENDE…ELGE), and 472-507 (PDAS…GTDW). D377, D379, D381, K383, E388, D413, D415, N417, E424, D449, D451, S453, Y455, E460, D485, D487, D489, R491, and E496 together coordinate Ca(2+).

Belongs to the protein kinase superfamily. Ser/Thr protein kinase family. CDPK subfamily.

The protein resides in the membrane. It carries out the reaction L-seryl-[protein] + ATP = O-phospho-L-seryl-[protein] + ADP + H(+). It catalyses the reaction L-threonyl-[protein] + ATP = O-phospho-L-threonyl-[protein] + ADP + H(+). Its activity is regulated as follows. Activated by calcium. Autophosphorylation may play an important role in the regulation of the kinase activity. May play a role in signal transduction pathways that involve calcium as a second messenger. May be a positive regulator controlling stress signal transduction. This chain is Calcium-dependent protein kinase 10 (CPK10), found in Arabidopsis thaliana (Mouse-ear cress).